A 177-amino-acid polypeptide reads, in one-letter code: NADH-quinone oxidoreductase subunit B (177 aa).

Residues Cys56, Cys57, Cys121, and Cys151 each contribute to the [4Fe-4S] cluster site.

This sequence belongs to the complex I 20 kDa subunit family. In terms of assembly, NDH-1 is composed of 14 different subunits. Subunits NuoB, C, D, E, F, and G constitute the peripheral sector of the complex. [4Fe-4S] cluster serves as cofactor.

Its subcellular location is the cell inner membrane. It carries out the reaction a quinone + NADH + 5 H(+)(in) = a quinol + NAD(+) + 4 H(+)(out). Functionally, NDH-1 shuttles electrons from NADH, via FMN and iron-sulfur (Fe-S) centers, to quinones in the respiratory chain. Couples the redox reaction to proton translocation (for every two electrons transferred, four hydrogen ions are translocated across the cytoplasmic membrane), and thus conserves the redox energy in a proton gradient. The polypeptide is NADH-quinone oxidoreductase subunit B (Dinoroseobacter shibae (strain DSM 16493 / NCIMB 14021 / DFL 12)).